A 398-amino-acid chain; its full sequence is Serpin-Z2B (398 aa).

Positions 343-367 (GTEAAATTIAKVVLRQAPPPSVLDF) are RCL.

It belongs to the serpin family.

In terms of biological role, inhibits chymotrypsin, cathepsin G and trypsin in vitro. This chain is Serpin-Z2B, found in Triticum aestivum (Wheat).